The primary structure comprises 676 residues: MRFEDIGISKVDKVCLVDRLGCQENLVGTVHVTTTHIIFRAENGSKELWLATGLISSVEKGTLTAAGCMLVIRCKHFQVITLLISRDKSCQDLYETLQRAAKPVSVNVTELLAFENREPVEDVRGWRRLDWNSEMTRQGITKSQWTESNINEGYTICDTYPNKLWFPTAASTSVLLGSCKFRSRGRLPVLTYFHQQTEAALCRCAQPLTGFSARCVEDEKLMELVGKANTNSDNLFLVDTRPRVNAMVNKVQGKGFEDERNYSNMRFHFFDIENIHVMRASQARLLDAVTKCRDVTEYWKTLEASGWLKHVRSVVECSLFLAESISRGTSCVVHCSDGWDRTSQVVALCQLLLDPYYRTIHGFQVLIEKDWLGFGHKFDDRCGHVGALNDEAGKEVSPIFTQWLDCIWQIMQQKPRAFQFNERYLIEMHEHVYSCQFGTFIGNCDKDRRDLNLSKRTKSLWTWMDARHDDYMNPFYSPTAHVALLDLDTRAARFTVWTAMYNRFDNGLQPRERLEDLTMAAMEHVGVLESHVAQLRTRLAELKTQQNQQITSTNTPTNMVDSGMSSATDDLKNLSLSHPLDPLSSTLPILERATSQESGVMDSSLYYPDEALTKYSLKWQPLRGADRCSNPACRGEFSSTIERRIHCHLCGMIFCRRCLKVSADERERVCDKCKTD.

The region spanning 125-501 (GWRRLDWNSE…ARFTVWTAMY (377 aa)) is the Myotubularin phosphatase domain. A 1,2-diacyl-sn-glycero-3-phospho-(1D-myo-inositol-3,5-bisphosphate)-binding residues include Asn-249, Asn-274, and Ile-275. 3 residues coordinate a 1,2-diacyl-sn-glycero-3-phospho-(1D-myo-inositol-3-phosphate): Asn-249, Asn-274, and Ile-275. Substrate-binding positions include 249 to 252 (NKVQ), 274 to 275 (NI), and 335 to 341 (CSDGWDR). Cys-335 serves as the catalytic Phosphocysteine intermediate. Ser-336, Asp-337, Gly-338, Trp-339, Asp-340, Arg-341, Lys-377, and Arg-381 together coordinate a 1,2-diacyl-sn-glycero-3-phospho-(1D-myo-inositol-3,5-bisphosphate). A 1,2-diacyl-sn-glycero-3-phospho-(1D-myo-inositol-3-phosphate) contacts are provided by Ser-336, Asp-337, Gly-338, Trp-339, Asp-340, and Arg-341. Arg-381 is a binding site for a 1,2-diacyl-sn-glycero-3-phospho-(1D-myo-inositol-3-phosphate). Arg-381 serves as a coordination point for substrate. The FYVE-type zinc-finger motif lies at 618-675 (KWQPLRGADRCSNPACRGEFSSTIERRIHCHLCGMIFCRRCLKVSADERERVCDKCKT).

Belongs to the protein-tyrosine phosphatase family. Non-receptor class myotubularin subfamily. In terms of assembly, heterodimer with mtm-9. Expressed in intestinal cells. Expressed in head neurons, pre-anal ganglion, hypodermal cells, anal depressor muscle and non-neuronal cells in the tail.

Its subcellular location is the cytoplasm. It localises to the membrane. It is found in the apical cell membrane. The enzyme catalyses a 1,2-diacyl-sn-glycero-3-phospho-(1D-myo-inositol-3,5-bisphosphate) + H2O = a 1,2-diacyl-sn-glycero-3-phospho-(1D-myo-inositol-5-phosphate) + phosphate. It catalyses the reaction a 1,2-diacyl-sn-glycero-3-phospho-(1D-myo-inositol-3-phosphate) + H2O = a 1,2-diacyl-sn-glycero-3-phospho-(1D-myo-inositol) + phosphate. The catalysed reaction is 1,2-dioctanoyl-sn-glycero-3-phospho-(1D-myo-inositol-3,5-bisphosphate) + H2O = 1,2-dioctanoyl-sn-glycero-3-phospho-(1D-myo-inositol-5-phosphate) + phosphate. It carries out the reaction 1,2-dioctanoyl-sn-glycero-3-phospho-(1-D-myo-inositol-3-phosphate) + H2O = 1,2-dioctanoyl-sn-glycero-3-phospho-(1D-myo-inositol) + phosphate. In terms of biological role, probable lipid phosphatase that specifically dephosphorylates the D-3 position of phosphatidylinositol 3-phosphate and phosphatidylinositol 3,5-bisphosphate, generating phosphatidylinositol and phosphatidylinositol 5-phosphate. In association with mtm-9, plays a role in endosome trafficking probably by regulating phosphatidylinositol-3-phosphate levels. Regulates fluid phase endocytosis in coelomocytes. Controls the endosomal localization of sorting nexin snx-3 and the levels of sorting receptor mig-14. By regulating the retrograde transport of mig-14, may be involved in the secretion of Wnt ligands such as egl-20. Regulates posterior migration of QL neuroblast descendants and the anterior migration of QR neuroblast descendants and HSN neurons during larval development. Involved in the formation of correct synapse number in DA9 motor neurons probably in part by regulating the secretion of Wnt ligand egl-20. The protein is Phosphatidylinositol-3,5-bisphosphate 3-phosphatase MTMR6 of Caenorhabditis elegans.